The following is a 134-amino-acid chain: MDLRTGEYITAHQATSGVYTFEITNPLYFTITRHNQQPFNSKYNLLTFQIRFNHNLRKALGIHKCFLNFRIWTTLQSPTGHFLRVFRFQVYKYLNNIGVISLNNVIRAVDYVLFDVFENTIDVIEQHEIKYNLY.

It belongs to the geminiviridae replication enhancer protein family. As to quaternary structure, homooligomer. Interacts with the replication-associated protein (REP). Interacts with host proliferating cell nuclear antigen (PCNA). Interacts with host retinoblastoma-related protein 1 (RBR1), and may thereby deregulate the host cell cycle. Oligomerization and interaction with PCNA are necessary for optimal replication enhancement.

Its function is as follows. Increases viral DNA accumulation. Enhances infectivity and symptom expression. This is Replication enhancer protein from Solanum lycopersicum (Tomato).